Consider the following 277-residue polypeptide: Phosphatidylglycerol--prolipoprotein diacylglyceryl transferase (277 aa).

Helical transmembrane passes span 18 to 38, 51 to 71, 89 to 109, and 116 to 136; these read ISVK…LLLA, IIVD…RIYY, IWHG…TAII, and ISFW…QAIG. Arginine 137 is an a 1,2-diacyl-sn-glycero-3-phospho-(1'-sn-glycerol) binding site. Transmembrane regions (helical) follow at residues 177 to 197, 205 to 225, and 235 to 255; these read QPTF…LLII, GELF…IEGM, and FRVS…IIIY.

This sequence belongs to the Lgt family.

The protein resides in the cell membrane. It catalyses the reaction L-cysteinyl-[prolipoprotein] + a 1,2-diacyl-sn-glycero-3-phospho-(1'-sn-glycerol) = an S-1,2-diacyl-sn-glyceryl-L-cysteinyl-[prolipoprotein] + sn-glycerol 1-phosphate + H(+). It participates in protein modification; lipoprotein biosynthesis (diacylglyceryl transfer). In terms of biological role, catalyzes the transfer of the diacylglyceryl group from phosphatidylglycerol to the sulfhydryl group of the N-terminal cysteine of a prolipoprotein, the first step in the formation of mature lipoproteins. This Listeria monocytogenes serotype 4b (strain CLIP80459) protein is Phosphatidylglycerol--prolipoprotein diacylglyceryl transferase.